A 205-amino-acid polypeptide reads, in one-letter code: Ribonuclease HII (205 aa).

The 184-residue stretch at 22–205 folds into the RNase H type-2 domain; sequence RFICGVDEAG…RKSFLKNILR (184 aa). Residues aspartate 28, glutamate 29, and aspartate 120 each contribute to the a divalent metal cation site.

The protein belongs to the RNase HII family. It depends on Mn(2+) as a cofactor. Mg(2+) is required as a cofactor.

It localises to the cytoplasm. The enzyme catalyses Endonucleolytic cleavage to 5'-phosphomonoester.. In terms of biological role, endonuclease that specifically degrades the RNA of RNA-DNA hybrids. The protein is Ribonuclease HII of Caldicellulosiruptor saccharolyticus (strain ATCC 43494 / DSM 8903 / Tp8T 6331).